The following is a 627-amino-acid chain: tRNA uridine 5-carboxymethylaminomethyl modification enzyme MnmG (627 aa).

FAD is bound by residues 13–18 (GGGHAG), Val-125, and Ser-180. 274-288 (GPRYCPSIEDKVVRF) serves as a coordination point for NAD(+). Gln-371 provides a ligand contact to FAD.

Belongs to the MnmG family. As to quaternary structure, homodimer. Heterotetramer of two MnmE and two MnmG subunits. FAD serves as cofactor.

It is found in the cytoplasm. In terms of biological role, NAD-binding protein involved in the addition of a carboxymethylaminomethyl (cmnm) group at the wobble position (U34) of certain tRNAs, forming tRNA-cmnm(5)s(2)U34. This Francisella philomiragia subsp. philomiragia (strain ATCC 25017 / CCUG 19701 / FSC 153 / O#319-036) protein is tRNA uridine 5-carboxymethylaminomethyl modification enzyme MnmG.